Reading from the N-terminus, the 304-residue chain is Olfactory receptor 8G2 (304 aa).

Residues Met1–Phe41 are Extracellular-facing. The N-linked (GlcNAc...) asparagine glycan is linked to Asn18. A helical transmembrane segment spans residues Leu42–Ile62. Residues Gly63–His69 are Cytoplasmic-facing. A helical transmembrane segment spans residues Thr70 to Ile90. The Extracellular portion of the chain corresponds to Thr91–Cys110. The cysteines at positions 110 and 192 are disulfide-linked. Residues Met111 to Val130 traverse the membrane as a helical segment. Residues Thr131–Cys154 lie on the Cytoplasmic side of the membrane. Residues Phe155–Phe175 form a helical membrane-spanning segment. Topologically, residues Met176–Asp193 are extracellular. A helical transmembrane segment spans residues Leu194–Val214. At Leu215–Ala217 the chain is on the cytoplasmic side. Residues Phe218 to Ile238 form a helical membrane-spanning segment. Over Leu239–His257 the chain is Extracellular. The helical transmembrane segment at Ile258 to Val278 threads the bilayer. The Cytoplasmic segment spans residues Ser279–Ala304.

The protein belongs to the G-protein coupled receptor 1 family.

Its subcellular location is the cell membrane. In terms of biological role, odorant receptor. This is Olfactory receptor 8G2 from Homo sapiens (Human).